A 95-amino-acid chain; its full sequence is MGKYETIFILHPSLDEEGYKANVEKFKGVIENGGGVIENVDIWGKRKLAYEIKKVNEGYYTLITFNADPTLPKELDRVFRITDTVVRHIIVKDEK.

It belongs to the bacterial ribosomal protein bS6 family.

Binds together with bS18 to 16S ribosomal RNA. The polypeptide is Small ribosomal subunit protein bS6 (Clostridium kluyveri (strain NBRC 12016)).